A 1138-amino-acid polypeptide reads, in one-letter code: Exportin-6-B (1138 aa).

Residues 31–97 (IESLLNNFAQ…RSSLPKLLLS (67 aa)) enclose the Importin N-terminal domain. Low complexity predominate over residues 291-307 (SVTTNTTSSVVNGGSSS). The tract at residues 291–315 (SVTTNTTSSVVNGGSSSPPLHSAAP) is disordered.

The protein belongs to the exportin family.

It is found in the nucleus. Its subcellular location is the cytoplasm. Mediates the nuclear export of actin and profilin-actin complexes in somatic cells. Oocyte nuclei lack active actin export. In terms of biological role, mediates the nuclear export of actin and profilin-actin complexes in somatic cells. This chain is Exportin-6-B (xpo6-b), found in Xenopus laevis (African clawed frog).